The chain runs to 469 residues: Putative dipeptidase SSP1012 (469 aa).

Position 84 (histidine 84) interacts with Zn(2+). Aspartate 86 is an active-site residue. Aspartate 115 provides a ligand contact to Zn(2+). Glutamate 149 serves as the catalytic Proton acceptor. Residues glutamate 150, aspartate 173, and histidine 440 each coordinate Zn(2+).

Belongs to the peptidase M20A family. It depends on Zn(2+) as a cofactor.

This chain is Putative dipeptidase SSP1012, found in Staphylococcus saprophyticus subsp. saprophyticus (strain ATCC 15305 / DSM 20229 / NCIMB 8711 / NCTC 7292 / S-41).